Reading from the N-terminus, the 54-residue chain is uncharacterized protein (54 aa).

Residues Ser21–Val43 form a helical membrane-spanning segment.

The protein resides in the membrane. This is an uncharacterized protein from Saccharomyces cerevisiae (strain ATCC 204508 / S288c) (Baker's yeast).